A 373-amino-acid chain; its full sequence is Putative F-box/kelch-repeat protein At5g24040 (373 aa).

Positions 2 to 50 (VKWSELPPEILHLISLKIDNPFDLIHFRSVCSFWRSSSLLKFRHMTSLR) constitute an F-box domain. 2 Kelch repeats span residues 165–207 (NEYM…PFKG) and 262–308 (YDFH…CTFS).

The sequence is that of Putative F-box/kelch-repeat protein At5g24040 from Arabidopsis thaliana (Mouse-ear cress).